Here is a 58-residue protein sequence, read N- to C-terminus: Mesomartoxin (58 aa).

A signal peptide spans 1–29 (MMSRLSVFILIALVLSVIIDVLNNSKVEG). 3 disulfide bridges follow: C31/C49, C35/C54, and C39/C56.

It belongs to the short scorpion toxin superfamily. Potassium channel inhibitor family. Alpha-KTx 26 subfamily. Expressed by the venom gland.

The protein localises to the secreted. Its function is as follows. Recombinant toxin that reversibly blocks the voltage-gated potassium channels Shaker (IC(50)=0.054 nM), rKv1.2/KCNA2 (IC(50)=15.6 nM), and rKv1.3/KCNA3 (IC(50)=12.5 uM). This Olivierus martensii (Manchurian scorpion) protein is Mesomartoxin.